The sequence spans 90 residues: Serine protease inhibitor kazal-like protein, minor form (90 aa).

A signal peptide spans 1-23 (MSSTWIKFLFILTLVLLPYSVFS). The region spanning 33–89 (VIKEPNCTMYKSKSECSNIAENPVCADDRNTYYNECYFCIEKVVEKLKYRYHGICIY) is the Kazal-like domain. An N-linked (GlcNAc...) asparagine glycan is attached at Asn-38.

In terms of tissue distribution, luminal fluid and mucosal folds of the seminal vesicles (at protein level). Not detected in brain, heart, lung, liver, kidney, stomach, small intestine, muscle, skin, thymus, placenta or bladder.

The protein resides in the secreted. Its function is as follows. Does not function as an inhibitor of trypsin, chymotrypsin, subtilisin or elastase. Binds sperm and enhances sperm motility. May act as a decapacitation factor, suppresses BSA-stimulated sperm capacitation and blocks sperm-oocyte interactions in vitro. In Mus musculus (Mouse), this protein is Serine protease inhibitor kazal-like protein, minor form (Spinkl).